We begin with the raw amino-acid sequence, 387 residues long: RNA polymerase II elongation factor ELL3 (387 aa).

Disordered regions lie at residues 127–148 (LTEGTRESESWQDSEDEPEGHP) and 186–275 (LSNR…EEVP). The span at 230 to 239 (SPLQGLSNQD) shows a compositional bias: polar residues. Serine 240 is subject to Phosphoserine. The segment covering 240–251 (SPEEQDWGQDAD) has biased composition (acidic residues). Positions 257–271 (EQSLSVQSASESPSP) are enriched in low complexity. Residues 275–385 (PDYLLQYSTI…LILEFEEKNR (111 aa)) form the OCEL domain.

This sequence belongs to the ELL/occludin family. In terms of assembly, interacts with AFF4. Component of the super elongation complex (SEC), at least composed of EAF1, EAF2, CDK9, MLLT3/AF9, AFF (AFF1 or AFF4), the P-TEFb complex and ELL (ELL, ELL2 or ELL3). Component of the little elongation complex (LEC), at least composed of ELL (ELL, ELL2 or ELL3), ZC3H8, ICE1 and ICE2.

It is found in the nucleus. In terms of biological role, enhancer-binding elongation factor that specifically binds enhancers in embryonic stem cells (ES cells), marks them, and is required for their future activation during stem cell specification. Elongation factor component of the super elongation complex (SEC), a complex required to increase the catalytic rate of RNA polymerase II transcription by suppressing transient pausing by the polymerase at multiple sites along the DNA. Component of the little elongation complex (LEC), a complex required to regulate small nuclear RNA (snRNA) gene transcription by RNA polymerase II and III. Does not only bind to enhancer regions of active genes, but also marks the enhancers that are in a poised or inactive state in ES cells and is required for establishing proper RNA polymerase II occupancy at developmentally regulated genes in a cohesin-dependent manner. Probably required for priming developmentally regulated genes for later recruitment of the super elongation complex (SEC), for transcriptional activation during differentiation. Required for recruitment of P-TEFb within SEC during differentiation. Probably preloaded on germ cell chromatin, suggesting that it may prime gene activation by marking enhancers as early as in the germ cells. Promoting epithelial-mesenchymal transition (EMT). The polypeptide is RNA polymerase II elongation factor ELL3 (Ell3) (Rattus norvegicus (Rat)).